The primary structure comprises 409 residues: Serine/threonine transporter SstT (409 aa).

9 helical membrane-spanning segments follow: residues 24–44, 48–68, 82–102, 142–162, 194–214, 218–238, 292–312, 319–339, and 365–385; these read LALG…AGLF, FVGA…AATI, IIVL…IAGM, AIAN…GAAL, LGIF…ALAG, LLAV…PAIV, IPLG…VLAM, GIQV…VSAC, and VAMQ…SAET.

Belongs to the dicarboxylate/amino acid:cation symporter (DAACS) (TC 2.A.23) family.

It localises to the cell inner membrane. The catalysed reaction is L-serine(in) + Na(+)(in) = L-serine(out) + Na(+)(out). It catalyses the reaction L-threonine(in) + Na(+)(in) = L-threonine(out) + Na(+)(out). Involved in the import of serine and threonine into the cell, with the concomitant import of sodium (symport system). The sequence is that of Serine/threonine transporter SstT from Neisseria gonorrhoeae (strain NCCP11945).